Consider the following 812-residue polypeptide: MLMTTTTIAMSLSHDVIIAAAQRAARAIPPLWPLASSVAVNPFLGQASEPLEVAAARLRRASGIAVTMPRSWYAERLQSGEITEDDLQAAFQTAPAARRPPNVSALKHAIKVARPAPQAIPTVAELARDVTAIDWPGIVNERIGHWAAGYFDQGQALWAVGQSGGAYSTWRIIATHDLTPEIAGLAGFSQSVSDAPATAEDALVDCVARLGLSPDALDGYFHRLLTTLGGWGQVARYRLWQAELNGGTDACVTDLLAIRMLWEAALLHNGGSALVPGWQSAIAAYAAPVAASSDDVVDSILQEAAERAAQRKLNTVLAAPSSARLSRGRLTLQMAFCIDVRSEVFRRALESLDSGITTLGFAGFFGFGIGHRRFASDVVEARLPVLLSPGVVTCAGEPTPAANAAELSARITARAKRAWGRFKLAAISSFAFVEATGPIYIAKLLRDGLALARHHAPTDPAPRPAHELDLDTRLTMAARILKAMSFTSNFARLVVLAGHGAKVVNNPHASALHCGACGGYSGEVNAQLLASLLNDHQVRAGLAERGIVIPADTLFLAALHDTTTDAVTLFADDHPSPTHAQDLAQVTQWLAAAGALARGERALRLPRANRSQDIAHRARDWAEIRPEWALAGCQAFIAAPRSRSAGRDLAGRAFLHDYDWRCDHGFGVLELILTAPVVVASWISLQYYGSTVAPERFGAGNKLLHNVTGGIGVVEGNGGILRTGLPWQSVHDGERLIHEPLRLSVLIEAPTEAIGAILERHPQLRALFDNRWLHLFALDDEGRMARRYIGDLSWETYVGDASSQSNRASTLA.

Cysteine 337, aspartate 339, histidine 499, and cysteine 514 together coordinate Zn(2+).

The protein belongs to the inorganic carbon transporter (TC 9.A.2) DabA family. Forms a complex with DabB. The cofactor is Zn(2+).

It is found in the cell inner membrane. Its function is as follows. Part of an energy-coupled inorganic carbon pump. The polypeptide is Probable inorganic carbon transporter subunit DabA (Xanthomonas oryzae pv. oryzae (strain KACC10331 / KXO85)).